Here is a 509-residue protein sequence, read N- to C-terminus: Probable cytosol aminopeptidase (509 aa).

Residues Lys-277 and Asp-282 each contribute to the Mn(2+) site. Lys-289 is an active-site residue. 3 residues coordinate Mn(2+): Asp-300, Asp-359, and Glu-361. The active site involves Arg-363.

Belongs to the peptidase M17 family. Mn(2+) serves as cofactor.

The protein resides in the cytoplasm. It catalyses the reaction Release of an N-terminal amino acid, Xaa-|-Yaa-, in which Xaa is preferably Leu, but may be other amino acids including Pro although not Arg or Lys, and Yaa may be Pro. Amino acid amides and methyl esters are also readily hydrolyzed, but rates on arylamides are exceedingly low.. The enzyme catalyses Release of an N-terminal amino acid, preferentially leucine, but not glutamic or aspartic acids.. Its function is as follows. Presumably involved in the processing and regular turnover of intracellular proteins. Catalyzes the removal of unsubstituted N-terminal amino acids from various peptides. This Chloroherpeton thalassium (strain ATCC 35110 / GB-78) protein is Probable cytosol aminopeptidase.